A 406-amino-acid polypeptide reads, in one-letter code: MEEPLGSPPAALSALEKNVAELTVMDVYDIASLVGHEFERVIDQHGCEAIARLMPKVVRVLEILEVLVSRHHVAPELDELRLELDRLRVERMDRIEKERKHQKELELVEDVWRGEAQDLLSQIAQLQEENKQLMTNLNHKDVGFSEEELQKHEGMSERERQVMKRLKEVVDKQRDEIRAKDRELVLKNEDVEALQQQQTRLMKINHDLRHRVTVVEAQGKALIEQKVELEADLQTKEQEMGSLRAELGKLRERLQGEHSQNGEEEEAEIPPQPDGEESISDAEKAALDLKDPNRPRFTLQELRDVLHERNELKSKVFLLQEELAYYKSEEIEEENRIPQPPPITHPRTSPQPESGIKRLFSFFSRDKRRLANTQRPTHIHESFGQWAITHRDDGYTEQGQEALQHL.

S7 carries the post-translational modification Phosphoserine. The region spanning 10 to 97 (AALSALEKNV…RVERMDRIEK (88 aa)) is the RH1 domain. Position 47 is an S-nitrosocysteine (C47). Positions 76 to 258 (ELDELRLELD…KLRERLQGEH (183 aa)) form a coiled coil. Disordered stretches follow at residues 255–280 (QGEH…ESIS) and 330–354 (EIEE…QPES). A Phosphoserine modification is found at S259. Positions 262 to 280 (GEEEEAEIPPQPDGEESIS) are enriched in acidic residues. The 66-residue stretch at 294 to 359 (RPRFTLQELR…PQPESGIKRL (66 aa)) folds into the RH2 domain.

It belongs to the RILPL family. Interacts (when S-nitrosylated) with GAPDH. Interacts with RAB8A; interaction is dependent on the phosphorylation of 'Thr-72' of RAB8A. Interacts with RAB10 and RAB12; the interaction is dependent on the phosphorylation of 'Thr-73' of RAB10, and 'Ser-105' of RAB12. Post-translationally, S-nitrosylation is required for the interaction with GAPDH. Highly expressed in heart, skeletal muscle, brain and lung (at protein level).

The protein localises to the cytoplasm. Its subcellular location is the cytosol. The protein resides in the cytoskeleton. It is found in the microtubule organizing center. It localises to the centrosome. The protein localises to the centriole. Its subcellular location is the cilium basal body. Plays a role in the regulation of cell shape and polarity. Plays a role in cellular protein transport, including protein transport away from primary cilia. Neuroprotective protein, which acts by sequestring GAPDH in the cytosol and prevent the apoptotic function of GAPDH in the nucleus. Competes with SIAH1 for binding GAPDH. Does not regulate lysosomal morphology and distribution. Binds to RAB10 following LRRK2-mediated RAB10 phosphorylation which leads to inhibition of ciliogenesis. This chain is RILP-like protein 1 (Rilpl1), found in Rattus norvegicus (Rat).